The sequence spans 212 residues: Fibrillarin-like rRNA/tRNA 2'-O-methyltransferase (212 aa).

S-adenosyl-L-methionine contacts are provided by residues 76 to 77, 94 to 95, 119 to 120, and 139 to 142; these read TT, EL, DA, and DIAQ.

Belongs to the methyltransferase superfamily. Fibrillarin family. Interacts with nop5. Component of box C/D small ribonucleoprotein (sRNP) particles that contain rpl7ae, FlpA and nop5, plus a guide RNA.

Functionally, involved in pre-rRNA and tRNA processing. Utilizes the methyl donor S-adenosyl-L-methionine to catalyze the site-specific 2'-hydroxyl methylation of ribose moieties in rRNA and tRNA. Site specificity is provided by a guide RNA that base pairs with the substrate. Methylation occurs at a characteristic distance from the sequence involved in base pairing with the guide RNA. The protein is Fibrillarin-like rRNA/tRNA 2'-O-methyltransferase of Picrophilus torridus (strain ATCC 700027 / DSM 9790 / JCM 10055 / NBRC 100828 / KAW 2/3).